Consider the following 312-residue polypeptide: Eukaryotic translation initiation factor 2 subunit 2 (312 aa).

2 disordered regions span residues 26–104 (AALG…NLDM) and 125–146 (ADQADDDKSEDKENDEDNSSTW). The residue at position 44 (S44) is a Phosphoserine. Acidic residues-rich tracts occupy residues 90–102 (AASEEPEEEEINL) and 125–142 (ADQADDDKSEDKENDEDN). S133 is modified (phosphoserine). T145 is modified (phosphothreonine). The C4-type zinc-finger motif lies at 260 to 284 (CHTCRSPETILQKDTRLFFLQCESC).

The protein belongs to the eIF-2-beta/eIF-5 family. Eukaryotic translation initiation factor 2 eIF2 is a heterotrimeric complex composed of an alpha, a beta and a gamma subunit.

The protein resides in the cytoplasm. It is found in the cytosol. Functionally, component of the eIF2 complex that functions in the early steps of protein synthesis by forming a ternary complex with GTP and initiator tRNA. This complex binds to a 40S ribosomal subunit, followed by mRNA binding to form a 43S pre-initiation complex (43S PIC). Junction of the 60S ribosomal subunit to form the 80S initiation complex is preceded by hydrolysis of the GTP bound to eIF2 and release of an eIF2-GDP binary complex. In order for eIF2 to recycle and catalyze another round of initiation, the GDP bound to eIF2 must exchange with GTP by way of a reaction catalyzed by eIF2B. The sequence is that of Eukaryotic translation initiation factor 2 subunit 2 from Drosophila melanogaster (Fruit fly).